A 207-amino-acid polypeptide reads, in one-letter code: Prolactin (207 aa).

An N-terminal signal peptide occupies residues 1-20 (KSRLYFAVTVLMCAFVSING). 2 cysteine pairs are disulfide-bonded: cysteine 66-cysteine 180 and cysteine 197-cysteine 207.

This sequence belongs to the somatotropin/prolactin family. Pituitary gland.

The protein localises to the secreted. The polypeptide is Prolactin (prl) (Hypophthalmichthys molitrix (Silver carp)).